Here is a 212-residue protein sequence, read N- to C-terminus: Proheparin-binding EGF-like growth factor (212 aa).

A signal peptide spans 1-18; sequence MDGRVVLIHALLTAVCSA. The Extracellular portion of the chain corresponds to 19–167; sequence AVGKFGRDGP…PSTYDHTTAL (149 aa). The interval 82 to 108 is disordered; that stretch reads SKPQGPVTPKKKGNGNKRRKGKGLGKK. A compositionally biased stretch (basic residues) spans 90–106; it reads PKKKGNGNKRRKGKGLG. The region spanning 108–148 is the EGF-like domain; it reads KRDPCLRKYKDFCIHGECKYIRELGAPSCICQPGYHGERCH. Disulfide bonds link Cys112–Cys125, Cys120–Cys136, and Cys138–Cys147. The propeptide at 153-212 is C-terminal; sequence PVEHPPSTYDHTTALAVVAVVLSSLCLVIITALLMFRCHKRGVYDVENEEKIKLGITVNH. Residues 168–188 form a helical membrane-spanning segment; it reads AVVAVVLSSLCLVIITALLMF. Over 189–212 the chain is Cytoplasmic; it reads RCHKRGVYDVENEEKIKLGITVNH.

In terms of assembly, interacts with CNIH2.

Its subcellular location is the secreted. The protein localises to the extracellular space. It localises to the cell membrane. In terms of biological role, may be involved in macrophage-mediated cellular proliferation. It is mitogenic for fibroblasts and smooth muscle but not endothelial cells. It is able to bind EGF receptor/EGFR with higher affinity than EGF itself and is a far more potent mitogen for smooth muscle cells than EGF. Plays an important role in the proper development of cranial nerves by inhibiting the migration of the cranial neural crest cells (NCCs) into the odd-numbered neuromeres (r3 and r5) of the hindbrain Plays a role in mediating v-Jun-induced oncogenic transformation. The protein is Proheparin-binding EGF-like growth factor (HBEGF) of Gallus gallus (Chicken).